We begin with the raw amino-acid sequence, 345 residues long: WD40 repeat protein poxJ (345 aa).

WD repeat units follow at residues 15-49, 59-100, 101-146, and 250-284; these read ANPP…YDVS, LFNF…EAQQ, VAAH…PLAT, and VNDV…RLKS.

The protein belongs to the WD repeat rae1 family.

It functions in the pathway secondary metabolite biosynthesis. WD40 repeat protein; part of the gene cluster that mediates the biosynthesis of oxaleimides, cytotoxic compounds containing an unusual disubstituted succinimide moiety. The first step of the pathway is provided by the HR-PKS poxF that serves in a new mode of collaborative biosynthesis with the PKS-NRPS poxE, by providing the olefin containing amino acid substrate via the synthesis of an ACP-bound dec-4-enoate. The cytochrome P450 monooxygenase poxM-catalyzed oxidation at the alpha-position creates the enzyme-bound 2-hydroxydec-4-enoyl-ACP thioester, which may be prone to spontaneous hydrolysis to yield 2-hydroxydec-4-enoic acid due to increased electrophilicity of the carbonyl. 2-hydroxydec-4-enoic acid can then be further oxidized by poxM to yield the alpha-ketoacid 2-oxodec-4-enoicacid, which is reductively aminated by the aminotransferase poxL to yield (S,E)-2-aminodec-4-enoic acid. The Hybrid PKS-NRPS synthetase poxE then performs condensation between the octaketide product of its PKS modules and the amino group of (S,E)-2-aminodec-4-enoic acid which is activated and incorporated by the adenylation domain. The resulting aminoacyl product can be cyclized by the Diels-Alderase PoxQ and reductively released by the reductive (R) domain of poxE to yield an aldehyde intermediate. The released aldehyde is then substrate for a Knoevenagel condensation by the hydrolyase poxO followed by an oxidation at the 5-position of the pyrrolidone ring. The presence of the olefin from the amino acid building block allows for migration of the substituted allyl group to occur. This allylic transposition reaction takes place in a conjugate addition, semipinacol-like fashion to yield a succinimide intermediate. Iterative two-electron oxidations of the C7 methyl of the succinimide intermediate to the carboxylic acid can be catalyzed by one of two remaining cytochrome P450 monooxygenasess poxC or poxD to yield oxaleimide A. Subsequent oxidation yields the maleimide scaffold oxaleimide I. Both oxaleimide A and oxaleimide I can undergo oxidative modifications in the decalin ring to yield the series of products oxaleimides B to H. This Penicillium oxalicum (strain 114-2 / CGMCC 5302) (Penicillium decumbens) protein is WD40 repeat protein poxJ.